The chain runs to 726 residues: Catalase-peroxidase (726 aa).

The segment covering 1 to 12 (MSTPSDQHNTLS) has biased composition (polar residues). Residues 1–34 (MSTPSDQHNTLSAGKCPFHQGNSNQTAGGGTSSR) form a disordered region. Positions 105–226 (WHSAGTYRSA…LGATEMGLIY (122 aa)) form a cross-link, tryptophyl-tyrosyl-methioninium (Trp-Tyr) (with M-252). The Proton acceptor role is filled by histidine 106. The tryptophyl-tyrosyl-methioninium (Tyr-Met) (with W-105) cross-link spans 226–252 (YVNPEGPNHSGDPASAAPAIRATFGNM). Residue histidine 267 participates in heme b binding.

This sequence belongs to the peroxidase family. Peroxidase/catalase subfamily. Homodimer or homotetramer. Heme b is required as a cofactor. Formation of the three residue Trp-Tyr-Met cross-link is important for the catalase, but not the peroxidase activity of the enzyme.

The catalysed reaction is H2O2 + AH2 = A + 2 H2O. It catalyses the reaction 2 H2O2 = O2 + 2 H2O. Functionally, bifunctional enzyme with both catalase and broad-spectrum peroxidase activity. The chain is Catalase-peroxidase from Cronobacter sakazakii (strain ATCC BAA-894) (Enterobacter sakazakii).